Reading from the N-terminus, the 83-residue chain is Exodeoxyribonuclease 7 small subunit (83 aa).

It belongs to the XseB family. Heterooligomer composed of large and small subunits.

It is found in the cytoplasm. The catalysed reaction is Exonucleolytic cleavage in either 5'- to 3'- or 3'- to 5'-direction to yield nucleoside 5'-phosphates.. Functionally, bidirectionally degrades single-stranded DNA into large acid-insoluble oligonucleotides, which are then degraded further into small acid-soluble oligonucleotides. The protein is Exodeoxyribonuclease 7 small subunit of Bradyrhizobium diazoefficiens (strain JCM 10833 / BCRC 13528 / IAM 13628 / NBRC 14792 / USDA 110).